The primary structure comprises 275 residues: uncharacterized protein (275 aa).

NAD(+)-binding positions include 20–22 (RAQ), 41–42 (DI), 80–81 (DI), and Asn-107. Ser-160 is a substrate binding site. The Proton acceptor role is filled by Tyr-173. Residues Lys-177 and 206 to 208 (VDT) contribute to the NAD(+) site.

This sequence belongs to the short-chain dehydrogenases/reductases (SDR) family.

This is an uncharacterized protein from Mycobacterium tuberculosis (strain CDC 1551 / Oshkosh).